A 365-amino-acid chain; its full sequence is Heterogeneous nuclear ribonucleoproteins A1 homolog (365 aa).

The globular A domain stretch occupies residues 4 to 94 (SEAPNEPEQL…EPKRAVSRED (91 aa)). RRM domains follow at residues 14 to 97 (RKLF…DSSR) and 105 to 184 (KKIF…LSKQ). Residues 95-185 (SSRPGAHLTV…QVRKALSKQE (91 aa)) are globular B domain. Disordered stretches follow at residues 175-208 (SQVR…RGGF) and 328-365 (GPMK…GRRF). Gly residues-rich tracts occupy residues 198-208 (GSGNYGSRGGF) and 330-365 (MKGG…GRRF). Residues 321-359 (SQSSSNFGPMKGGNYGGGRNSGPYGGGYGGGSASSSSGY) form a nuclear targeting sequence region.

The protein resides in the nucleus. The protein localises to the cytoplasm. This protein is a component of ribonucleosomes. This chain is Heterogeneous nuclear ribonucleoproteins A1 homolog (hnrnpa1), found in Xenopus laevis (African clawed frog).